A 477-amino-acid chain; its full sequence is Multidrug resistance protein PmpM (477 aa).

12 helical membrane-spanning segments follow: residues 21–41 (LLTL…MGFV), 56–76 (AVAL…GTLL), 104–124 (LALL…EPIL), 133–153 (LIGP…AAAL), 171–191 (MVLG…LIYG), 202–222 (GCGW…LFWV), 253–273 (LPIG…ALLI), 286–306 (IALN…MAVT), 326–346 (GVGM…MLLL), 360–380 (VIAI…SDAL), 398–418 (MIMT…SLGL), and 431–451 (LWQG…IRLA).

This sequence belongs to the multi antimicrobial extrusion (MATE) (TC 2.A.66.1) family.

The protein localises to the cell inner membrane. Its function is as follows. Multidrug efflux pump that functions as an H(+)/drug antiporter. Confers resistance to benzalkonium chloride, fluoroquinolones, ethidium bromide, acriflavine and tetraphenylphosphonium chloride. The protein is Multidrug resistance protein PmpM (pmpM) of Pseudomonas aeruginosa (strain ATCC 15692 / DSM 22644 / CIP 104116 / JCM 14847 / LMG 12228 / 1C / PRS 101 / PAO1).